The primary structure comprises 287 residues: MAIRKFRPYTPGTRTRVVTDFSEVTGRKPEKTLVVSKHRKKGRNNRGVITCRHRGGGHKRLYRLVDFRRNKHGVTAKVAAIHYDPHRNARLALLFYSDGEKRYILAPAGVQVGQTVVSGPEVPIENGNAMPLSSVPLGSSVHCVELYAGRGGQMVRTAGASAQVMAKEGDYVALKLPSTEVRLVRRECYATLGEVGNSEVRNTSLGKAGRRRWLGRRPQVRGSVMNPCDHPHGGGEGRAPIGRSGPVTPWGKPALGLKTRKRNKPSNQYVLRKRRKTSKRSRGGRDS.

Positions 221–287 are disordered; the sequence is RGSVMNPCDH…SKRSRGGRDS (67 aa). Basic residues predominate over residues 271 to 287; the sequence is LRKRRKTSKRSRGGRDS.

The protein belongs to the universal ribosomal protein uL2 family. As to quaternary structure, part of the 50S ribosomal subunit. Forms a bridge to the 30S subunit in the 70S ribosome.

One of the primary rRNA binding proteins. Required for association of the 30S and 50S subunits to form the 70S ribosome, for tRNA binding and peptide bond formation. It has been suggested to have peptidyltransferase activity; this is somewhat controversial. Makes several contacts with the 16S rRNA in the 70S ribosome. The chain is Large ribosomal subunit protein uL2 from Synechococcus sp. (strain CC9902).